The following is a 567-amino-acid chain: Urease subunit alpha (567 aa).

The 439-residue stretch at 129–567 (GGIDSHIHFI…LPMAQRYFLF (439 aa)) folds into the Urease domain. Ni(2+)-binding residues include His134, His136, and Lys217. An N6-carboxylysine modification is found at Lys217. His219 provides a ligand contact to substrate. His246 and His272 together coordinate Ni(2+). Residue His320 is the Proton donor of the active site. Asp360 contributes to the Ni(2+) binding site.

The protein belongs to the metallo-dependent hydrolases superfamily. Urease alpha subunit family. In terms of assembly, heterotrimer of UreA (gamma), UreB (beta) and UreC (alpha) subunits. Three heterotrimers associate to form the active enzyme. Ni cation is required as a cofactor. Carboxylation allows a single lysine to coordinate two nickel ions.

It localises to the cytoplasm. The enzyme catalyses urea + 2 H2O + H(+) = hydrogencarbonate + 2 NH4(+). The protein operates within nitrogen metabolism; urea degradation; CO(2) and NH(3) from urea (urease route): step 1/1. This is Urease subunit alpha from Tolumonas auensis (strain DSM 9187 / NBRC 110442 / TA 4).